The sequence spans 318 residues: Putative olfactory receptor 2W6 (318 aa).

Topologically, residues Met-1 to Leu-31 are extracellular. Residues Ile-32–Val-52 form a helical membrane-spanning segment. Over Leu-53–Thr-63 the chain is Cytoplasmic. Residues Pro-64 to Ile-84 traverse the membrane as a helical segment. Residues Pro-85–Cys-103 are Extracellular-facing. Cysteines 103 and 185 form a disulfide. A helical membrane pass occupies residues Ala-104–Met-124. The Cytoplasmic portion of the chain corresponds to Ala-125–Arg-145. The helical transmembrane segment at Leu-146 to Ala-166 threads the bilayer. The Extracellular segment spans residues Pro-167 to Glu-202. The helical transmembrane segment at Ala-203–Ser-223 threads the bilayer. Residues Tyr-224–Asn-245 lie on the Cytoplasmic side of the membrane. The chain crosses the membrane as a helical span at residues Thr-246–Leu-266. The Extracellular segment spans residues Gln-267–Gly-277. The chain crosses the membrane as a helical span at residues Lys-278–Leu-298. Residues Arg-299 to Ile-318 are Cytoplasmic-facing.

Belongs to the G-protein coupled receptor 1 family.

It localises to the cell membrane. Odorant receptor. In Homo sapiens (Human), this protein is Putative olfactory receptor 2W6 (OR2W6P).